Reading from the N-terminus, the 434-residue chain is Serine--tRNA ligase (434 aa).

Residue T230–E232 participates in L-serine binding. ATP-binding positions include R261–E263 and V277. Residue E284 coordinates L-serine. Residue E348–S351 participates in ATP binding. T393 contacts L-serine.

The protein belongs to the class-II aminoacyl-tRNA synthetase family. Type-1 seryl-tRNA synthetase subfamily. In terms of assembly, homodimer. The tRNA molecule binds across the dimer.

It localises to the cytoplasm. It catalyses the reaction tRNA(Ser) + L-serine + ATP = L-seryl-tRNA(Ser) + AMP + diphosphate + H(+). The catalysed reaction is tRNA(Sec) + L-serine + ATP = L-seryl-tRNA(Sec) + AMP + diphosphate + H(+). The protein operates within aminoacyl-tRNA biosynthesis; selenocysteinyl-tRNA(Sec) biosynthesis; L-seryl-tRNA(Sec) from L-serine and tRNA(Sec): step 1/1. Catalyzes the attachment of serine to tRNA(Ser). Is also able to aminoacylate tRNA(Sec) with serine, to form the misacylated tRNA L-seryl-tRNA(Sec), which will be further converted into selenocysteinyl-tRNA(Sec). The sequence is that of Serine--tRNA ligase from Kocuria rhizophila (strain ATCC 9341 / DSM 348 / NBRC 103217 / DC2201).